The chain runs to 401 residues: Chalcone synthase 6 (401 aa).

The active site involves Cys-168.

The protein belongs to the thiolase-like superfamily. Chalcone/stilbene synthases family.

The catalysed reaction is (E)-4-coumaroyl-CoA + 3 malonyl-CoA + 3 H(+) = 2',4,4',6'-tetrahydroxychalcone + 3 CO2 + 4 CoA. Its pathway is secondary metabolite biosynthesis; flavonoid biosynthesis. In terms of biological role, the primary product of this enzyme is 4,2',4',6'-tetrahydroxychalcone (also termed naringenin-chalcone or chalcone) which can under specific conditions spontaneously isomerize into naringenin. The chain is Chalcone synthase 6 (CHS6) from Sorghum bicolor (Sorghum).